Consider the following 65-residue polypeptide: MPKVKTNRSAAKRFRITKNGKIMRNHAYRSHKTGKKRRNALRALRKKDVVSSADKNRVLRLLGKK.

The protein belongs to the bacterial ribosomal protein bL35 family.

The polypeptide is Large ribosomal subunit protein bL35 (Thermotoga maritima (strain ATCC 43589 / DSM 3109 / JCM 10099 / NBRC 100826 / MSB8)).